The chain runs to 156 residues: Small ribosomal subunit protein uS7 (156 aa).

It belongs to the universal ribosomal protein uS7 family. Part of the 30S ribosomal subunit. Contacts proteins S9 and S11.

Functionally, one of the primary rRNA binding proteins, it binds directly to 16S rRNA where it nucleates assembly of the head domain of the 30S subunit. Is located at the subunit interface close to the decoding center, probably blocks exit of the E-site tRNA. The protein is Small ribosomal subunit protein uS7 of Burkholderia multivorans (strain ATCC 17616 / 249).